Reading from the N-terminus, the 154-residue chain is Nucleoside diphosphate kinase A2 (154 aa).

ATP contacts are provided by K13, F61, R89, T95, R106, and N116. Residue H119 is the Pros-phosphohistidine intermediate of the active site.

The protein belongs to the NDK family. Mg(2+) serves as cofactor.

The protein localises to the cytoplasm. The enzyme catalyses a 2'-deoxyribonucleoside 5'-diphosphate + ATP = a 2'-deoxyribonucleoside 5'-triphosphate + ADP. It carries out the reaction a ribonucleoside 5'-diphosphate + ATP = a ribonucleoside 5'-triphosphate + ADP. In terms of biological role, major role in the synthesis of nucleoside triphosphates other than ATP. The ATP gamma phosphate is transferred to the NDP beta phosphate via a ping-pong mechanism, using a phosphorylated active-site intermediate. This chain is Nucleoside diphosphate kinase A2, found in Xenopus laevis (African clawed frog).